Consider the following 268-residue polypeptide: MADS-box protein FBP24 (268 aa).

Residues 4–64 (MGRGKIEVKR…GKLFEYCSQP (61 aa)) enclose the MADS-box domain. Residues 88 to 178 (RVQLYDEVAK…YQWLMNNQMY (91 aa)) enclose the K-box domain. The disordered stretch occupies residues 243 to 268 (NSISPYRLQPSHPNLQDSHVHGPSYD).

It localises to the nucleus. Its function is as follows. Probable transcription factor. The chain is MADS-box protein FBP24 (FBP24) from Petunia hybrida (Petunia).